A 137-amino-acid polypeptide reads, in one-letter code: Large ribosomal subunit protein uL16c (137 aa).

This sequence belongs to the universal ribosomal protein uL16 family. As to quaternary structure, part of the 50S ribosomal subunit.

The protein localises to the plastid. The polypeptide is Large ribosomal subunit protein uL16c (Aneura mirabilis (Parasitic liverwort)).